The following is a 136-amino-acid chain: uncharacterized protein (136 aa).

This sequence to E.coli YcgX and YdfO.

This is an uncharacterized protein from Escherichia coli (strain K12).